The sequence spans 265 residues: Protein N-terminal and lysine N-methyltransferase EFM7 (265 aa).

Residues methionine 1–glutamate 25 are disordered. Residues tryptophan 67, glycine 93–alanine 95, aspartate 115, tryptophan 152, and serine 176 contribute to the S-adenosyl-L-methionine site.

The protein belongs to the class I-like SAM-binding methyltransferase superfamily. EFM7 family.

The protein resides in the cytoplasm. Functionally, S-adenosyl-L-methionine-dependent protein methyltransferase that trimethylates the N-terminal glycine 'Gly-2' of elongation factor 1-alpha, before also catalyzing the mono- and dimethylation of 'Lys-3'. This chain is Protein N-terminal and lysine N-methyltransferase EFM7, found in Eremothecium gossypii (strain ATCC 10895 / CBS 109.51 / FGSC 9923 / NRRL Y-1056) (Yeast).